We begin with the raw amino-acid sequence, 291 residues long: N-acetylmannosamine kinase (291 aa).

ATP contacts are provided by residues 5-12 (AIDIGGTK) and 132-139 (GVGGGVVS). Residues His156, Cys166, Cys168, and Cys173 each coordinate Zn(2+).

The protein belongs to the ROK (NagC/XylR) family. NanK subfamily. In terms of assembly, homodimer.

It catalyses the reaction an N-acyl-D-mannosamine + ATP = an N-acyl-D-mannosamine 6-phosphate + ADP + H(+). Its pathway is amino-sugar metabolism; N-acetylneuraminate degradation; D-fructose 6-phosphate from N-acetylneuraminate: step 2/5. In terms of biological role, catalyzes the phosphorylation of N-acetylmannosamine (ManNAc) to ManNAc-6-P. This Shigella boydii serotype 18 (strain CDC 3083-94 / BS512) protein is N-acetylmannosamine kinase.